We begin with the raw amino-acid sequence, 300 residues long: Ribosomal RNA small subunit methyltransferase H (300 aa).

S-adenosyl-L-methionine is bound by residues 46–48 (GGH), Asp65, Phe92, Asp107, and Gln114.

Belongs to the methyltransferase superfamily. RsmH family.

The protein localises to the cytoplasm. It catalyses the reaction cytidine(1402) in 16S rRNA + S-adenosyl-L-methionine = N(4)-methylcytidine(1402) in 16S rRNA + S-adenosyl-L-homocysteine + H(+). Specifically methylates the N4 position of cytidine in position 1402 (C1402) of 16S rRNA. The chain is Ribosomal RNA small subunit methyltransferase H from Prochlorococcus marinus (strain MIT 9515).